Here is a 443-residue protein sequence, read N- to C-terminus: Type I restriction enzyme HindI methylase subunit (443 aa).

Residues 117–122, 146–148, and Glu-173 each bind S-adenosyl-L-methionine; these read QYFTPK and SGG.

Belongs to the N(4)/N(6)-methyltransferase family. As to quaternary structure, the type I restriction/modification system is composed of three polypeptides R, M and S; the restriction enzyme has stoichiometry R(2)M(2)S(1) while the methyltransferase is M(2)S(1).

The catalysed reaction is a 2'-deoxyadenosine in DNA + S-adenosyl-L-methionine = an N(6)-methyl-2'-deoxyadenosine in DNA + S-adenosyl-L-homocysteine + H(+). In terms of biological role, the subtype gamma methyltransferase (M) subunit of a type I restriction enzyme. The M and S subunits together form a methyltransferase (MTase) that methylates adenosines in the sequence 5'-RAACN(5)TAG-3'. Methylation protects against cleavage by HindI. In the presence of the R subunit the complex can also act as an endonuclease, binding to the same target sequence but cutting the DNA some distance from this site. Whether the DNA is cut or modified depends on the methylation state of the target sequence. When the target site is unmodified, the DNA is cut. When the target site is hemimethylated, the complex acts as a maintenance MTase modifying the DNA so that both strands become methylated. After locating a non-methylated recognition site, the enzyme complex serves as a molecular motor that translocates DNA in an ATP-dependent manner until a collision occurs that triggers cleavage. The polypeptide is Type I restriction enzyme HindI methylase subunit (Haemophilus influenzae (strain ATCC 51907 / DSM 11121 / KW20 / Rd)).